Consider the following 95-residue polypeptide: Aspartyl/glutamyl-tRNA(Asn/Gln) amidotransferase subunit C (95 aa).

Residues 51–95 are disordered; the sequence is PTSHATLTSSRLREDVTRPSLPPEKSLANAPAKSDTSFAVPKIIE.

It belongs to the GatC family. Heterotrimer of A, B and C subunits.

The catalysed reaction is L-glutamyl-tRNA(Gln) + L-glutamine + ATP + H2O = L-glutaminyl-tRNA(Gln) + L-glutamate + ADP + phosphate + H(+). It carries out the reaction L-aspartyl-tRNA(Asn) + L-glutamine + ATP + H2O = L-asparaginyl-tRNA(Asn) + L-glutamate + ADP + phosphate + 2 H(+). Its function is as follows. Allows the formation of correctly charged Asn-tRNA(Asn) or Gln-tRNA(Gln) through the transamidation of misacylated Asp-tRNA(Asn) or Glu-tRNA(Gln) in organisms which lack either or both of asparaginyl-tRNA or glutaminyl-tRNA synthetases. The reaction takes place in the presence of glutamine and ATP through an activated phospho-Asp-tRNA(Asn) or phospho-Glu-tRNA(Gln). The polypeptide is Aspartyl/glutamyl-tRNA(Asn/Gln) amidotransferase subunit C (Myxococcus xanthus (strain DK1622)).